The following is a 266-amino-acid chain: Sesquipedalian-1 (266 aa).

In terms of domain architecture, PH spans 17–113; it reads PVDNAGFLYK…WVKALSRASF (97 aa). Positions 165–184 are disordered; sequence QPSVAPQRPPPLPPRRRASA. Ser-183 bears the Phosphoserine mark. The F&amp;H signature appears at 191-203; the sequence is SFAQLHARYGLEV.

Belongs to the sesquipedalian family. Forms homodimers and heterodimers with PHETA2. Interacts with OCRL and INPP5B. Interaction with OCRL may be important for endosomal morphology and function.

Its subcellular location is the early endosome. The protein localises to the recycling endosome. It localises to the golgi apparatus. The protein resides in the trans-Golgi network. It is found in the cytoplasmic vesicle. Its subcellular location is the clathrin-coated vesicle. Functionally, plays a role in endocytic trafficking. Required for receptor recycling from endosomes, both to the trans-Golgi network and the plasma membrane. The chain is Sesquipedalian-1 from Mus musculus (Mouse).